An 85-amino-acid polypeptide reads, in one-letter code: UPF0297 protein LBUL_1485 (85 aa).

This sequence belongs to the UPF0297 family.

The chain is UPF0297 protein LBUL_1485 from Lactobacillus delbrueckii subsp. bulgaricus (strain ATCC BAA-365 / Lb-18).